Reading from the N-terminus, the 269-residue chain is Surfeit locus protein 4 (269 aa).

The next 5 helical transmembrane spans lie at 64–84 (LLAS…CVLV), 92–112 (YACF…SILW), 179–199 (FFSI…AIGF), 203–223 (LAAL…NAFW), and 239–259 (FFQT…GPGG). The short motif at 266–269 (KKEW) is the Di-lysine motif element.

Belongs to the SURF4 family. In terms of assembly, found in a complex composed at least of SURF4, TMED2 and TMED10. May interact with LMAN1. Interacts with ZFYVE27 and with KIF5A in a ZFYVE27-dependent manner. Interacts with STING1. Interacts with SAR1B. Interacts with TMEM41B.

It is found in the endoplasmic reticulum membrane. The protein resides in the endoplasmic reticulum-Golgi intermediate compartment membrane. It localises to the golgi apparatus membrane. Functionally, endoplasmic reticulum cargo receptor that mediates the export of lipoproteins by recruiting cargos into COPII vesicles to facilitate their secretion. Acts as a cargo receptor for lipoproteins bearing both APOB and APOA1, thereby regulating lipoprotein delivery and the maintenance of lipid homeostasis. Synergizes with the GTPase SAR1B to mediate transport of circulating lipoproteins. Promotes the secretion of PCSK9. Also mediates the efficient secretion of erythropoietin (EPO). May also play a role in the maintenance of the architecture of the endoplasmic reticulum-Golgi intermediate compartment and of the Golgi. In Homo sapiens (Human), this protein is Surfeit locus protein 4.